The following is a 308-amino-acid chain: Ribonuclease Z (308 aa).

Zn(2+) is bound by residues His60, His62, Asp64, His65, His140, Asp209, and His269. Asp64 functions as the Proton acceptor in the catalytic mechanism.

This sequence belongs to the RNase Z family. Homodimer. The cofactor is Zn(2+).

The catalysed reaction is Endonucleolytic cleavage of RNA, removing extra 3' nucleotides from tRNA precursor, generating 3' termini of tRNAs. A 3'-hydroxy group is left at the tRNA terminus and a 5'-phosphoryl group is left at the trailer molecule.. Its function is as follows. Zinc phosphodiesterase, which displays some tRNA 3'-processing endonuclease activity. Probably involved in tRNA maturation, by removing a 3'-trailer from precursor tRNA. This chain is Ribonuclease Z, found in Methanococcus maripaludis (strain DSM 14266 / JCM 13030 / NBRC 101832 / S2 / LL).